A 125-amino-acid chain; its full sequence is Ribosome-binding factor A (125 aa).

It belongs to the RbfA family. Monomer. Binds 30S ribosomal subunits, but not 50S ribosomal subunits or 70S ribosomes.

It is found in the cytoplasm. One of several proteins that assist in the late maturation steps of the functional core of the 30S ribosomal subunit. Associates with free 30S ribosomal subunits (but not with 30S subunits that are part of 70S ribosomes or polysomes). Required for efficient processing of 16S rRNA. May interact with the 5'-terminal helix region of 16S rRNA. This chain is Ribosome-binding factor A, found in Paracidovorax citrulli (strain AAC00-1) (Acidovorax citrulli).